We begin with the raw amino-acid sequence, 391 residues long: Small ribosomal subunit protein bS1 (391 aa).

S1 motif domains are found at residues 16-90 (GDKV…LSRR), 108-173 (NEII…LSRK), 194-262 (GDVI…LSIK), and 279-348 (NDVI…LSIK).

It belongs to the bacterial ribosomal protein bS1 family.

Binds mRNA; thus facilitating recognition of the initiation point. It is needed to translate mRNA with a short Shine-Dalgarno (SD) purine-rich sequence. The sequence is that of Small ribosomal subunit protein bS1 (rpsA) from Staphylococcus aureus (strain MSSA476).